The chain runs to 178 residues: Small ribosomal subunit protein uS4 (178 aa).

Residues 104–166 (RRLQTMVYKK…PNSPMASENH (63 aa)) form the S4 RNA-binding domain. The interval 157–178 (PNSPMASENHPERTAAVSEENQ) is disordered.

This sequence belongs to the universal ribosomal protein uS4 family. In terms of assembly, part of the 30S ribosomal subunit. Contacts protein S5. The interaction surface between S4 and S5 is involved in control of translational fidelity.

One of the primary rRNA binding proteins, it binds directly to 16S rRNA where it nucleates assembly of the body of the 30S subunit. Functionally, with S5 and S12 plays an important role in translational accuracy. This is Small ribosomal subunit protein uS4 from Methanococcus maripaludis (strain C7 / ATCC BAA-1331).